A 946-amino-acid polypeptide reads, in one-letter code: Protocadherin alpha-10 (946 aa).

Positions 1–30 (MSCVAMKYCHESWCLLLSLLLFAIWEPGSG) are cleaved as a signal peptide. Cadherin domains are found at residues 31–134 (QLRY…PPVF), 135–243 (PTTE…APAF), 244–351 (DRAI…APKI), 352–456 (IVTS…APAF), 457–566 (AQSE…APTL), and 582–679 (VPRS…APKA). Topologically, residues 31–697 (QLRYSVPEEA…ASESSVVDVN (667 aa)) are extracellular. A glycan (N-linked (GlcNAc...) asparagine) is linked at Asn-258. Asn-549 carries an N-linked (GlcNAc...) asparagine glycan. Residues 698–718 (VYLIIAICAVSSLLVLTLVLY) traverse the membrane as a helical segment. Residues 719–946 (TALRCSALPT…GNSTTDNSDQ (228 aa)) are Cytoplasmic-facing. PXXP repeat units lie at residues 734-737 (PGKP), 774-777 (PSVP), 795-798 (PRQP), 828-831 (PGGP), 869-872 (PGNP), and 887-890 (PGSP). A 6 X 4 AA repeats of P-X-X-P region spans residues 734-890 (PGKPMLVCSS…PDKFIIPGSP (157 aa)). Disordered stretches follow at residues 826–852 (AGPGGPDQQWPTVSSATPEPEAGEVSP) and 865–946 (FKYG…NSDQ). Residues 905-919 (DKSDFITFGKKEETK) are compositionally biased toward basic and acidic residues.

The protein localises to the cell membrane. Potential calcium-dependent cell-adhesion protein. May be involved in the establishment and maintenance of specific neuronal connections in the brain. The sequence is that of Protocadherin alpha-10 from Mus musculus (Mouse).